The sequence spans 418 residues: MAGRLPACVIDVGTGYSKLGFAGNKEPQFIIPSAIAIKESARVGDTNTRRITKGIEDLDFFIGDEAFDATGYSIKYPVRHGLVEDWDLMERFLEQCVFKYLRAEPEDHYFLLTEPPLNTPENREYTAEIMFETFNVPGLYIAVQAVLALAASWASRSAEERTLTGIVVDSGDGVTHVIPVAEGYVIGSCIKHIPIAGRNITSFIQSLLREREVGIPPEQSLETAKAIKEKHCYICPDIAKEFAKYDTEPGKWIRNFSGVNTVTKAPFNVDVGYERFLGPEIFFHPEFSNPDFTIPLSEIVDNVIQNCPIDVRRPLYNNIVLSGGSTMFKDFGRRLQRDIKRSVDTRLRISENLSEGRIKPKPIDVQVITHHMQRYAVWFGGSMLASTPEFYQVCHTKAAYEEYGPSICRHNPVFGTMT.

Belongs to the actin family. ARP3 subfamily. In terms of assembly, component of the Arp2/3 complex.

The protein localises to the cytoplasm. It localises to the cytoskeleton. Functionally, functions as ATP-binding component of the Arp2/3 complex which is involved in regulation of actin polymerization and together with an activating nucleation-promoting factor (NPF) mediates the formation of branched actin networks. Seems to contact the pointed end of the daughter actin filament. Required during embryogenesis for the developmental migration of tail hemocytes anteriorly, along the ventral midline. The polypeptide is Actin-related protein 3 (Drosophila melanogaster (Fruit fly)).